The following is a 354-amino-acid chain: Alternative oxidase, mitochondrial (354 aa).

A mitochondrion-targeting transit peptide spans 1-64 (MNSMSTTGPI…RFISSTPQSQ (64 aa)). A helical transmembrane segment spans residues 153–173 (FVFLESVAGVPGMVGGMLRHL). Residues glutamate 157, glutamate 196, and histidine 199 each contribute to the Fe cation site. The chain crosses the membrane as a helical span at residues 215–235 (LMVLGAQGVFFNGFFLSYLIS). The Fe cation site is built by glutamate 247, glutamate 302, and histidine 305. The disordered stretch occupies residues 333-354 (KPHPGKGIKHLKTTGWEREEVV). Residues 335–344 (HPGKGIKHLK) show a composition bias toward basic residues.

It belongs to the alternative oxidase family. The cofactor is Fe cation.

Its subcellular location is the mitochondrion inner membrane. Functionally, catalyzes cyanide-resistant oxygen consumption. May increase respiration when the cytochrome respiratory pathway is restricted, or in response to low temperatures. The chain is Alternative oxidase, mitochondrial (alxA) from Emericella nidulans (strain FGSC A4 / ATCC 38163 / CBS 112.46 / NRRL 194 / M139) (Aspergillus nidulans).